A 147-amino-acid chain; its full sequence is D-aminoacyl-tRNA deacylase (147 aa).

The Gly-cisPro motif, important for rejection of L-amino acids motif lies at 136-137 (GP).

The protein belongs to the DTD family. As to quaternary structure, homodimer.

It localises to the cytoplasm. The enzyme catalyses glycyl-tRNA(Ala) + H2O = tRNA(Ala) + glycine + H(+). It catalyses the reaction a D-aminoacyl-tRNA + H2O = a tRNA + a D-alpha-amino acid + H(+). In terms of biological role, an aminoacyl-tRNA editing enzyme that deacylates mischarged D-aminoacyl-tRNAs. Also deacylates mischarged glycyl-tRNA(Ala), protecting cells against glycine mischarging by AlaRS. Acts via tRNA-based rather than protein-based catalysis; rejects L-amino acids rather than detecting D-amino acids in the active site. By recycling D-aminoacyl-tRNA to D-amino acids and free tRNA molecules, this enzyme counteracts the toxicity associated with the formation of D-aminoacyl-tRNA entities in vivo and helps enforce protein L-homochirality. The protein is D-aminoacyl-tRNA deacylase of Streptococcus agalactiae serotype III (strain NEM316).